The chain runs to 138 residues: Transcription antitermination protein NusB (138 aa).

The protein belongs to the NusB family.

Involved in transcription antitermination. Required for transcription of ribosomal RNA (rRNA) genes. Binds specifically to the boxA antiterminator sequence of the ribosomal RNA (rrn) operons. The sequence is that of Transcription antitermination protein NusB from Yersinia enterocolitica serotype O:8 / biotype 1B (strain NCTC 13174 / 8081).